The sequence spans 614 residues: Probable zinc transporter protein DDB_G0269332 (614 aa).

Disordered regions lie at residues 1–103 (MSDI…LPHL) and 115–178 (SSYN…NNEF). Residues 1–203 (MSDINSNSYD…NLNRDSDAKK (203 aa)) lie on the Cytoplasmic side of the membrane. The segment covering 17 to 64 (QHQQESQYHPQQQQQQQQQQQQQQEYYNQQHQQESQYQQQSPPQQQYD) has biased composition (low complexity). Positions 80 to 92 (GHGRSHNSGHGHS) are enriched in basic residues. Residues 121–176 (NNSGDISNSNNNNNNNNQYNYNNNNNNNNYNNNINNNQFNSSVYNNNNNNNNNNNN) are compositionally biased toward low complexity. The helical transmembrane segment at 204-224 (LAAWISVMLVFTIYEIFYGAY) threads the bilayer. The Extracellular segment spans residues 225-233 (LESLGLVSD). The helical transmembrane segment at 234–254 (GFHALFDCIGMGIALLAMLVG) threads the bilayer. Residues 255–270 (KRGISNQEYTYGYDRW) lie on the Cytoplasmic side of the membrane. A helical membrane pass occupies residues 271 to 291 (EVLGTFSNGCFLLFVSFFLFL). Over 292–306 (ESIERLLEPPHIHNH) the chain is Extracellular. The helical transmembrane segment at 307-327 (GRVMSLATISLIINIVGVLFF) threads the bilayer. The Cytoplasmic portion of the chain corresponds to 328 to 351 (KQKSNERKQQSSIRSENLLTISHH). The chain crosses the membrane as a helical span at residues 352 to 372 (ILVDSCTSLGVILSSLVGQAF). The Extracellular segment spans residues 373–377 (GLEIS). The chain crosses the membrane as a helical span at residues 378 to 398 (DSLISIIIACIIVYNALPICI). Residues 399-614 (KTSAILLQTT…NSSHSHAHNH (216 aa)) are Cytoplasmic-facing. The tract at residues 483–614 (EGKHNSHSHG…NSSHSHAHNH (132 aa)) is disordered. Basic residues-rich tracts occupy residues 487–499 (NSHS…HHPH) and 507–523 (SHNH…HGHS). Residues 525-535 (GGNDDHEHGEN) are compositionally biased toward basic and acidic residues. The span at 548–567 (VQPTSPFSSHYTDIHSNNTP) shows a compositional bias: polar residues. The span at 575–585 (QDDEDDEDDYD) shows a compositional bias: acidic residues. Basic and acidic residues predominate over residues 586–599 (HDEHHHDHDHDEHH). Basic residues predominate over residues 600-614 (HGHSHNSSHSHAHNH).

This sequence belongs to the cation diffusion facilitator (CDF) transporter (TC 2.A.4) family. SLC30A subfamily.

Its subcellular location is the membrane. May be involved in zinc transport from the cytoplasm to either intracellular organelles or extracellular spaces. The sequence is that of Probable zinc transporter protein DDB_G0269332 from Dictyostelium discoideum (Social amoeba).